Here is a 336-residue protein sequence, read N- to C-terminus: Holliday junction branch migration complex subunit RuvB (336 aa).

The large ATPase domain (RuvB-L) stretch occupies residues 4-184 (ADRLVSADSS…FGIVQRLEFY (181 aa)). ATP-binding positions include Ile-23, Arg-24, Gly-65, Lys-68, Thr-69, Thr-70, 131 to 133 (EDY), Arg-174, Tyr-184, and Arg-221. Thr-69 is a Mg(2+) binding site. Positions 185 to 255 (QIPDLQHIVS…IAAQALDMLN (71 aa)) are small ATPAse domain (RuvB-S). A head domain (RuvB-H) region spans residues 258–336 (AEGFDYMDRK…HFGITPPEMP (79 aa)). DNA contacts are provided by Arg-294, Arg-313, and Arg-318.

Belongs to the RuvB family. Homohexamer. Forms an RuvA(8)-RuvB(12)-Holliday junction (HJ) complex. HJ DNA is sandwiched between 2 RuvA tetramers; dsDNA enters through RuvA and exits via RuvB. An RuvB hexamer assembles on each DNA strand where it exits the tetramer. Each RuvB hexamer is contacted by two RuvA subunits (via domain III) on 2 adjacent RuvB subunits; this complex drives branch migration. In the full resolvosome a probable DNA-RuvA(4)-RuvB(12)-RuvC(2) complex forms which resolves the HJ.

It is found in the cytoplasm. It catalyses the reaction ATP + H2O = ADP + phosphate + H(+). The RuvA-RuvB-RuvC complex processes Holliday junction (HJ) DNA during genetic recombination and DNA repair, while the RuvA-RuvB complex plays an important role in the rescue of blocked DNA replication forks via replication fork reversal (RFR). RuvA specifically binds to HJ cruciform DNA, conferring on it an open structure. The RuvB hexamer acts as an ATP-dependent pump, pulling dsDNA into and through the RuvAB complex. RuvB forms 2 homohexamers on either side of HJ DNA bound by 1 or 2 RuvA tetramers; 4 subunits per hexamer contact DNA at a time. Coordinated motions by a converter formed by DNA-disengaged RuvB subunits stimulates ATP hydrolysis and nucleotide exchange. Immobilization of the converter enables RuvB to convert the ATP-contained energy into a lever motion, pulling 2 nucleotides of DNA out of the RuvA tetramer per ATP hydrolyzed, thus driving DNA branch migration. The RuvB motors rotate together with the DNA substrate, which together with the progressing nucleotide cycle form the mechanistic basis for DNA recombination by continuous HJ branch migration. Branch migration allows RuvC to scan DNA until it finds its consensus sequence, where it cleaves and resolves cruciform DNA. The chain is Holliday junction branch migration complex subunit RuvB from Klebsiella pneumoniae (strain 342).